Here is a 260-residue protein sequence, read N- to C-terminus: 3'-5' ssDNA/RNA exonuclease TatD (260 aa).

Residues Glu92, His128, and His153 each coordinate a divalent metal cation.

It belongs to the metallo-dependent hydrolases superfamily. TatD-type hydrolase family. TatD subfamily. As to quaternary structure, monomer. Requires Mg(2+) as cofactor.

The protein resides in the cytoplasm. Its function is as follows. 3'-5' exonuclease that prefers single-stranded DNA and RNA. May play a role in the H(2)O(2)-induced DNA damage repair. The sequence is that of 3'-5' ssDNA/RNA exonuclease TatD from Edwardsiella piscicida.